The primary structure comprises 386 residues: Succinate--CoA ligase [ADP-forming] subunit beta (386 aa).

The region spanning 9-244 (KAVLRSYGVS…LDEEDAKEIE (236 aa)) is the ATP-grasp domain. ATP-binding positions include lysine 46, 53–55 (GRG), glutamate 99, cysteine 102, and glutamate 107. Mg(2+) is bound by residues asparagine 199 and aspartate 213. Substrate is bound by residues asparagine 264 and 321–323 (GIM).

This sequence belongs to the succinate/malate CoA ligase beta subunit family. In terms of assembly, heterotetramer of two alpha and two beta subunits. Mg(2+) is required as a cofactor.

The enzyme catalyses succinate + ATP + CoA = succinyl-CoA + ADP + phosphate. It catalyses the reaction GTP + succinate + CoA = succinyl-CoA + GDP + phosphate. It functions in the pathway carbohydrate metabolism; tricarboxylic acid cycle; succinate from succinyl-CoA (ligase route): step 1/1. Succinyl-CoA synthetase functions in the citric acid cycle (TCA), coupling the hydrolysis of succinyl-CoA to the synthesis of either ATP or GTP and thus represents the only step of substrate-level phosphorylation in the TCA. The beta subunit provides nucleotide specificity of the enzyme and binds the substrate succinate, while the binding sites for coenzyme A and phosphate are found in the alpha subunit. The chain is Succinate--CoA ligase [ADP-forming] subunit beta from Bacillus thuringiensis (strain Al Hakam).